The primary structure comprises 213 residues: Nicotinate-nucleotide adenylyltransferase (213 aa).

Belongs to the NadD family.

The catalysed reaction is nicotinate beta-D-ribonucleotide + ATP + H(+) = deamido-NAD(+) + diphosphate. It functions in the pathway cofactor biosynthesis; NAD(+) biosynthesis; deamido-NAD(+) from nicotinate D-ribonucleotide: step 1/1. Catalyzes the reversible adenylation of nicotinate mononucleotide (NaMN) to nicotinic acid adenine dinucleotide (NaAD). The sequence is that of Nicotinate-nucleotide adenylyltransferase from Salmonella typhi.